The following is a 946-amino-acid chain: Protein RRC1 (946 aa).

Disordered stretches follow at residues 1–29 (MSSF…KAED) and 41–183 (SFQG…NLYV). Composition is skewed to basic and acidic residues over residues 15-29 (KHRE…KAED), 62-75 (DKPK…KSKD), and 98-147 (KGKE…DRQG). The RRM domain occupies 179–260 (TNLYVGNLSP…YELKIGWGKA (82 aa)). Residues 329–372 (VIDTLALYVLDGECAFEQAIMERGRGNPLFKFMFELGSKEHTYY) form an SURP motif repeat. The CID domain occupies 437 to 582 (LTDPQRDEFE…GLRSTFLRSG (146 aa)). Residues 631–665 (LMNLPIAELERRCRHNGLSLVGGRVMMVTRLLSLE) form the SAP domain. Disordered regions lie at residues 740–797 (ASKW…EQRQ) and 836–946 (EVDY…RGTR). The segment covering 757–767 (SSSSGSDNTGG) has biased composition (polar residues). 3 stretches are compositionally biased toward basic and acidic residues: residues 772–781 (ADGEDLKGND), 854–868 (IIER…QESS), and 886–946 (STRE…RGTR).

Component of the SWAP1-SFPS-RRC1 splicing factor complex which modulates pre-mRNA splicing to promote photomorphogenesis. Interacts with SWAP1 in a light-independent manner. In terms of tissue distribution, expressed in leaves, inflorescence stems, roots, flower buds, open flowers and siliques.

It is found in the nucleus speckle. Its function is as follows. As a member of the SWAP1-SFPS-RRC1 splicing factor complex, modulates photomorphogenesis by regulating the gene expression and pre-messenger RNA (mRNA) alternative splicing of a large number of genes, including those involved in plant responses to light signaling. SR-like splicing factor required for phytochrome B (phyB) signal transduction and involved in phyB-dependent alternative splicing. The sequence is that of Protein RRC1 from Arabidopsis thaliana (Mouse-ear cress).